Consider the following 856-residue polypeptide: Structure-specific endonuclease subunit SLX4 (856 aa).

Polar residues predominate over residues 1–19; the sequence is MDNAAIASQSNTPPSNGRS. Disordered stretches follow at residues 1–24, 38–65, 88–121, 139–202, 296–326, 362–392, 621–640, 668–689, and 715–742; these read MDNAAIASQSNTPPSNGRSSARFV, VIEPSSPFSPPSPSTLLTSLSKSPSHKI, VDSPKRQDKSITGSKAKPASTMRHGQRTASHKMA, KTRK…DNEL, GIQTPTESRPATNDSQSISSKQQRVKVKKPQ, KKMGVTKRTSGTERANAARGKSDTLKNGNGP, SKSSKLEPKPNQRNHKSQGD, RLAKTSVKSQEPKSFSLSNEGP, and DSVGEALPLSPSHSSNGNGTLHHPQDCD. Residues 51–60 are compositionally biased toward low complexity; sequence STLLTSLSKS. The segment covering 139–152 has biased composition (basic residues); that stretch reads KTRKKKAATAKRTR. Over residues 296–309 the composition is skewed to polar residues; that stretch reads GIQTPTESRPATND. The span at 673-686 shows a compositional bias: polar residues; it reads SVKSQEPKSFSLSN.

Belongs to the SLX4 family. Forms a heterodimer with SLX1. Phosphorylated in response to DNA damage.

The protein resides in the nucleus. Its function is as follows. Regulatory subunit of the SLX1-SLX4 structure-specific endonuclease that resolves DNA secondary structures generated during DNA repair and recombination. Has endonuclease activity towards branched DNA substrates, introducing single-strand cuts in duplex DNA close to junctions with ss-DNA. In Blastomyces gilchristii (strain SLH14081) (Blastomyces dermatitidis), this protein is Structure-specific endonuclease subunit SLX4.